Reading from the N-terminus, the 155-residue chain is SsrA-binding protein (155 aa).

The protein belongs to the SmpB family.

Its subcellular location is the cytoplasm. Functionally, required for rescue of stalled ribosomes mediated by trans-translation. Binds to transfer-messenger RNA (tmRNA), required for stable association of tmRNA with ribosomes. tmRNA and SmpB together mimic tRNA shape, replacing the anticodon stem-loop with SmpB. tmRNA is encoded by the ssrA gene; the 2 termini fold to resemble tRNA(Ala) and it encodes a 'tag peptide', a short internal open reading frame. During trans-translation Ala-aminoacylated tmRNA acts like a tRNA, entering the A-site of stalled ribosomes, displacing the stalled mRNA. The ribosome then switches to translate the ORF on the tmRNA; the nascent peptide is terminated with the 'tag peptide' encoded by the tmRNA and targeted for degradation. The ribosome is freed to recommence translation, which seems to be the essential function of trans-translation. The protein is SsrA-binding protein of Geobacillus kaustophilus (strain HTA426).